Consider the following 337-residue polypeptide: Putative high mobility group B protein 11 (337 aa).

Residues 34–125 (VRNPELFWEM…MLFEFEHLYY (92 aa)) form the ARID domain. Disordered stretches follow at residues 197-221 (TKRGKKKAKSSQGDSHKPPKRQRTG) and 298-337 (AGTSASAAETADEASQENLAKTDACTSASSAAETEDEVSQ). The HMG box DNA-binding region spans 215 to 282 (PKRQRTGYNF…RYKMEILQYR (68 aa)). A compositionally biased stretch (low complexity) spans 319-329 (TDACTSASSAA).

The protein belongs to the HMGB family.

The protein localises to the nucleus. In terms of biological role, binds preferentially DNA with A/T-rich content. This Arabidopsis thaliana (Mouse-ear cress) protein is Putative high mobility group B protein 11 (HMGB11).